The sequence spans 394 residues: Queuine tRNA-ribosyltransferase (394 aa).

Asp99 serves as the catalytic Proton acceptor. Substrate is bound by residues Asp99 to Phe103, Asp153, Gln195, and Gly222. Residues Gly253–Asp259 form an RNA binding region. The active-site Nucleophile is the Asp272. An RNA binding; important for wobble base 34 recognition region spans residues Thr277 to Arg281. Zn(2+)-binding residues include Cys310, Cys312, Cys315, and His341.

The protein belongs to the queuine tRNA-ribosyltransferase family. As to quaternary structure, homodimer. Within each dimer, one monomer is responsible for RNA recognition and catalysis, while the other monomer binds to the replacement base PreQ1. Zn(2+) serves as cofactor.

The enzyme catalyses 7-aminomethyl-7-carbaguanine + guanosine(34) in tRNA = 7-aminomethyl-7-carbaguanosine(34) in tRNA + guanine. Its pathway is tRNA modification; tRNA-queuosine biosynthesis. In terms of biological role, catalyzes the base-exchange of a guanine (G) residue with the queuine precursor 7-aminomethyl-7-deazaguanine (PreQ1) at position 34 (anticodon wobble position) in tRNAs with GU(N) anticodons (tRNA-Asp, -Asn, -His and -Tyr). Catalysis occurs through a double-displacement mechanism. The nucleophile active site attacks the C1' of nucleotide 34 to detach the guanine base from the RNA, forming a covalent enzyme-RNA intermediate. The proton acceptor active site deprotonates the incoming PreQ1, allowing a nucleophilic attack on the C1' of the ribose to form the product. After dissociation, two additional enzymatic reactions on the tRNA convert PreQ1 to queuine (Q), resulting in the hypermodified nucleoside queuosine (7-(((4,5-cis-dihydroxy-2-cyclopenten-1-yl)amino)methyl)-7-deazaguanosine). This Deinococcus radiodurans (strain ATCC 13939 / DSM 20539 / JCM 16871 / CCUG 27074 / LMG 4051 / NBRC 15346 / NCIMB 9279 / VKM B-1422 / R1) protein is Queuine tRNA-ribosyltransferase.